Here is a 146-residue protein sequence, read N- to C-terminus: Large ribosomal subunit protein uL15 (146 aa).

Residues 1 to 13 (MKLHELKPAEGSR) show a composition bias toward basic and acidic residues. The interval 1–51 (MKLHELKPAEGSRKVRNRVGRGIGSGNGKTAGRGHKGQNARSGGGVRLGFE) is disordered. Gly residues-rich tracts occupy residues 21–31 (RGIGSGNGKTA) and 42–51 (SGGGVRLGFE).

Belongs to the universal ribosomal protein uL15 family. As to quaternary structure, part of the 50S ribosomal subunit.

In terms of biological role, binds to the 23S rRNA. This chain is Large ribosomal subunit protein uL15, found in Bacillus mycoides (strain KBAB4) (Bacillus weihenstephanensis).